A 460-amino-acid polypeptide reads, in one-letter code: NADH-ubiquinone oxidoreductase chain 4 (460 aa).

The next 13 membrane-spanning stretches (helical) occupy residues 22–42 (WLWP…LLWF), 59–79 (IDPL…LMIL), 93–113 (QRIY…AFSA), 114–134 (TELI…LIII), 148–168 (TYFL…LLLM), 195–215 (FWWT…GVHL), 225–245 (PIAG…YGMM), 258–278 (MAYP…SICL), 286–306 (LIAY…MIQT), 310–330 (FAGA…LFCL), 351–371 (VMLP…LALP), 394–414 (ILLT…MFLM), and 440–460 (LHLI…GWTF).

Belongs to the complex I subunit 4 family.

The protein localises to the mitochondrion membrane. The catalysed reaction is a ubiquinone + NADH + 5 H(+)(in) = a ubiquinol + NAD(+) + 4 H(+)(out). Functionally, core subunit of the mitochondrial membrane respiratory chain NADH dehydrogenase (Complex I) that is believed to belong to the minimal assembly required for catalysis. Complex I functions in the transfer of electrons from NADH to the respiratory chain. The immediate electron acceptor for the enzyme is believed to be ubiquinone. The protein is NADH-ubiquinone oxidoreductase chain 4 (MT-ND4) of Squalus acanthias (Spiny dogfish).